Reading from the N-terminus, the 329-residue chain is Malate dehydrogenase (329 aa).

An NAD(+)-binding site is contributed by 12–18 (GAAGQIG). Positions 93 and 99 each coordinate substrate. NAD(+) is bound by residues Asn106, Gln113, and 130–132 (TGN). Residues Asn132 and Arg163 each contribute to the substrate site. Catalysis depends on His188, which acts as the Proton acceptor.

The protein belongs to the LDH/MDH superfamily. MDH type 2 family.

It catalyses the reaction (S)-malate + NAD(+) = oxaloacetate + NADH + H(+). Functionally, catalyzes the reversible oxidation of malate to oxaloacetate. This Mycobacterium avium (strain 104) protein is Malate dehydrogenase.